The sequence spans 424 residues: Hemagglutinin-esterase (424 aa).

The N-terminal stretch at 1–16 (MFLLPRFVLVSCIIGS) is a signal peptide. The tract at residues 7 to 127 (FVLVSCIIGS…SNDIWMQNKG (121 aa)) is esterase domain 1. The Virion surface portion of the chain corresponds to 17–392 (LGFDNPPTNV…PICVYDPLPI (376 aa)). The active-site Nucleophile is the Ser-40. Cys-44 and Cys-65 form a disulfide bridge. N-linked (GlcNAc...) asparagine; by host glycosylation is found at Asn-54, Asn-89, Asn-153, Asn-236, and Asn-301. Disulfide bonds link Cys-113–Cys-162, Cys-197–Cys-276, and Cys-205–Cys-249. Residues 128 to 266 (LFYTQVYKNM…GNYLAISNEL (139 aa)) form a receptor binding region. Residues 267 to 379 (LLTVPTKAIC…RCPTAADINT (113 aa)) form an esterase domain 2 region. Cys-307 and Cys-312 form a disulfide bridge. Asn-316 carries N-linked (GlcNAc...) asparagine; by host glycosylation. Active-site charge relay system residues include Asp-326 and His-329. Cys-347 and Cys-371 are disulfide-bonded. An N-linked (GlcNAc...) asparagine; by host glycan is attached at Asn-358. Residues 393–413 (IFLGILLGVAVIIIVVLLLYF) form a helical membrane-spanning segment. Residues 414 to 424 (MVDNGTRLHDA) are Intravirion-facing. N-linked (GlcNAc...) asparagine; by host glycosylation is present at Asn-417.

This sequence belongs to the influenza type C/coronaviruses hemagglutinin-esterase family. In terms of assembly, homodimer; disulfide-linked. Forms a complex with the M protein in the pre-Golgi. Associates then with S-M complex to form a ternary complex S-M-HE. In terms of processing, N-glycosylated in the host RER.

Its subcellular location is the virion membrane. The protein resides in the host cell membrane. It carries out the reaction N-acetyl-9-O-acetylneuraminate + H2O = N-acetylneuraminate + acetate + H(+). The enzyme catalyses N-acetyl-4-O-acetylneuraminate + H2O = N-acetylneuraminate + acetate + H(+). Functionally, structural protein that makes short spikes at the surface of the virus. Contains receptor binding and receptor-destroying activities. Mediates de-O-acetylation of N-acetyl-4-O-acetylneuraminic acid, which is probably the receptor determinant recognized by the virus on the surface of erythrocytes and susceptible cells. This receptor-destroying activity is important for virus release as it probably helps preventing self-aggregation and ensures the efficient spread of the progeny virus from cell to cell. May serve as a secondary viral attachment protein for initiating infection, the spike protein being the major one. May become a target for both the humoral and the cellular branches of the immune system. In Bovine coronavirus (strain Ontario) (BCoV), this protein is Hemagglutinin-esterase.